A 207-amino-acid chain; its full sequence is Histidine biosynthesis bifunctional protein HisIE (207 aa).

The tract at residues 1–117 (MSLVTTINWE…GKQEQPALVF (117 aa)) is phosphoribosyl-AMP cyclohydrolase. Residues 118-207 (LHQLEQVLAN…TEKLQERHNK (90 aa)) form a phosphoribosyl-ATP pyrophosphohydrolase region.

This sequence in the N-terminal section; belongs to the PRA-CH family. In the C-terminal section; belongs to the PRA-PH family.

It is found in the cytoplasm. It catalyses the reaction 1-(5-phospho-beta-D-ribosyl)-ATP + H2O = 1-(5-phospho-beta-D-ribosyl)-5'-AMP + diphosphate + H(+). It carries out the reaction 1-(5-phospho-beta-D-ribosyl)-5'-AMP + H2O = 1-(5-phospho-beta-D-ribosyl)-5-[(5-phospho-beta-D-ribosylamino)methylideneamino]imidazole-4-carboxamide. It functions in the pathway amino-acid biosynthesis; L-histidine biosynthesis; L-histidine from 5-phospho-alpha-D-ribose 1-diphosphate: step 2/9. Its pathway is amino-acid biosynthesis; L-histidine biosynthesis; L-histidine from 5-phospho-alpha-D-ribose 1-diphosphate: step 3/9. In Photobacterium profundum (strain SS9), this protein is Histidine biosynthesis bifunctional protein HisIE.